The following is an 81-amino-acid chain: Lantipeptide prochlorosin 1.1 (81 aa).

Positions 1–65 (MSEEQLKAFI…DDDLEGVAGG (65 aa)) are excised as a propeptide. Residues 68-72 (CVQGT) constitute a cross-link (beta-methyllanthionine (Cys-Thr)). A cross-link (beta-methyllanthionine (Thr-Cys)) is located at residues 77 to 81 (TINVC).

Cross-links are proved in vitro, when coepressed in E.coli with the ProcM lanthionine synthetase. Post-translationally, the beta-methyllanthionine residues have a DL configuration (with 2S,3S,6R stereochemistry). In terms of processing, maturation of prochlorosin involves the enzymatic conversion of Thr, and Ser into dehydrated AA and the formation of thioether bonds with cysteines. This is followed by membrane translocation and cleavage of the modified precursor.

Its subcellular location is the secreted. Its function is as follows. Lanthionine-containing peptide (lantipeptide) with unknown function. Does not show antibiotic activity against Lactococcus lactis 117 and Bacillus subtilis 6633 bacteria. Organisms that produce this peptide live in oligotrophic environments at very dilute concentrations, suggesting this peptide is not secreted to influence other bacteria. This is Lantipeptide prochlorosin 1.1 from Prochlorococcus marinus (strain MIT 9313).